The primary structure comprises 611 residues: Glutamine--fructose-6-phosphate aminotransferase [isomerizing] (611 aa).

Cysteine 2 functions as the Nucleophile; for GATase activity in the catalytic mechanism. Residues 2 to 219 (CGIVGAIAER…EGDIAEIRRD (218 aa)) form the Glutamine amidotransferase type-2 domain. SIS domains follow at residues 287 to 427 (AAEL…VQKR) and 460 to 601 (VSEL…VDQP). The For Fru-6P isomerization activity role is filled by lysine 606.

As to quaternary structure, homodimer.

It is found in the cytoplasm. The catalysed reaction is D-fructose 6-phosphate + L-glutamine = D-glucosamine 6-phosphate + L-glutamate. Functionally, catalyzes the first step in hexosamine metabolism, converting fructose-6P into glucosamine-6P using glutamine as a nitrogen source. This is Glutamine--fructose-6-phosphate aminotransferase [isomerizing] from Pseudomonas aeruginosa (strain ATCC 15692 / DSM 22644 / CIP 104116 / JCM 14847 / LMG 12228 / 1C / PRS 101 / PAO1).